The following is a 260-amino-acid chain: Snake venom serine protease homolog 1 (260 aa).

Positions 1 to 18 (MVLIRVLANLLILQLSYA) are cleaved as a signal peptide. The propeptide occupies 19-24 (QKSSEL). One can recognise a Peptidase S1 domain in the interval 25–251 (IIGGDECNIN…HLDWIKSIIA (227 aa)). Cystine bridges form between cysteine 31-cysteine 165, cysteine 52-cysteine 68, cysteine 100-cysteine 258, cysteine 144-cysteine 212, cysteine 176-cysteine 191, and cysteine 202-cysteine 227. Residues asparagine 83, asparagine 123, and asparagine 124 are each glycosylated (N-linked (GlcNAc...) asparagine).

Belongs to the peptidase S1 family. Snake venom subfamily. As to expression, expressed by the venom gland.

It is found in the secreted. Snake venom serine protease homolog that may act in the hemostasis system of the prey. The sequence is that of Snake venom serine protease homolog 1 from Trimeresurus stejnegeri (Chinese green tree viper).